The primary structure comprises 378 residues: Succinyl-diaminopimelate desuccinylase (378 aa).

His68 is a Zn(2+) binding site. The active site involves Asp70. Asp101 is a Zn(2+) binding site. Glu135 serves as the catalytic Proton acceptor. Residues Glu136, Glu164, and His350 each contribute to the Zn(2+) site.

Belongs to the peptidase M20A family. DapE subfamily. Homodimer. Zn(2+) is required as a cofactor. The cofactor is Co(2+).

It catalyses the reaction N-succinyl-(2S,6S)-2,6-diaminopimelate + H2O = (2S,6S)-2,6-diaminopimelate + succinate. The protein operates within amino-acid biosynthesis; L-lysine biosynthesis via DAP pathway; LL-2,6-diaminopimelate from (S)-tetrahydrodipicolinate (succinylase route): step 3/3. Functionally, catalyzes the hydrolysis of N-succinyl-L,L-diaminopimelic acid (SDAP), forming succinate and LL-2,6-diaminopimelate (DAP), an intermediate involved in the bacterial biosynthesis of lysine and meso-diaminopimelic acid, an essential component of bacterial cell walls. The polypeptide is Succinyl-diaminopimelate desuccinylase (Vibrio atlanticus (strain LGP32) (Vibrio splendidus (strain Mel32))).